The sequence spans 149 residues: Large ribosomal subunit protein bL9 (149 aa).

Belongs to the bacterial ribosomal protein bL9 family.

Its function is as follows. Binds to the 23S rRNA. The chain is Large ribosomal subunit protein bL9 from Thermotoga maritima (strain ATCC 43589 / DSM 3109 / JCM 10099 / NBRC 100826 / MSB8).